The following is a 320-amino-acid chain: MIEIKNVSKYFSGNKVLKDVDLKIKGGEIFGIVGHSGAGKSTLLRCINGLETYDEGNVIVFGKDLKQINGKNLREFRKEVGMIFQNFNLLNRKDVYHNISLPLEVWGVPKNEIASRVKELLELVDLTDKIHSKPSNLSGGQKQRVAIARALALNPKILLCDEATSALDPNTTKSILNLLRTINSKLGITIVIVTHQMEVVKGICERVALIDAGVIKETGDVENLFLNPSSEMKKLIGQSDDDVLPKEGINIRVIFPKNSSEGALITSMARELNVDFSIVWGKLERFRDDVLGSLVINISEENKEVICNYLVSHNAIWEVA.

Residues 2–237 (IEIKNVSKYF…PSSEMKKLIG (236 aa)) form the ABC transporter domain. 34–41 (GHSGAGKS) is a binding site for ATP.

It belongs to the ABC transporter superfamily. Methionine importer (TC 3.A.1.24) family. The complex is composed of two ATP-binding proteins (MetN), two transmembrane proteins (MetI) and a solute-binding protein (MetQ).

Its subcellular location is the cell membrane. It carries out the reaction L-methionine(out) + ATP + H2O = L-methionine(in) + ADP + phosphate + H(+). The catalysed reaction is D-methionine(out) + ATP + H2O = D-methionine(in) + ADP + phosphate + H(+). In terms of biological role, part of the ABC transporter complex MetNIQ involved in methionine import. Responsible for energy coupling to the transport system. The sequence is that of Methionine import ATP-binding protein MetN from Clostridium acetobutylicum (strain ATCC 824 / DSM 792 / JCM 1419 / IAM 19013 / LMG 5710 / NBRC 13948 / NRRL B-527 / VKM B-1787 / 2291 / W).